The chain runs to 1005 residues: Ephrin type-A receptor 8 (1005 aa).

The signal sequence occupies residues 1 to 27; it reads MAPARGRLPPALWVVTAAAAAATCVSA. The Extracellular segment spans residues 28–542; sequence ARGEVNLLDT…KPRPRYDTRT (515 aa). Positions 31–209 constitute an Eph LBD domain; sequence EVNLLDTSTI…YYKKCPAMVR (179 aa). Fibronectin type-III domains are found at residues 328–438 and 439–534; these read PPSA…TNQA and APSQ…TGKP. 3 N-linked (GlcNAc...) asparagine glycosylation sites follow: Asn-340, Asn-407, and Asn-432. The chain crosses the membrane as a helical span at residues 543–563; that stretch reads IVWICLTLITGLVVLLLLLIC. The mediates interaction with ANKS1A and ANKS1B stretch occupies residues 564 to 570; it reads KKRHCGY. Topologically, residues 564 to 1005 are cytoplasmic; sequence KKRHCGYSKA…TSTQGPRRHL (442 aa). The tract at residues 589 to 644 is mediates interaction with PIK3CG and required for endocytosis; that stretch reads APPPVFLPLHHPPGKLPEPQFYAEPHTYEEPGRAGRSFTREIEASRIHIEKIIGSG. Tyr-616 bears the Phosphotyrosine; by autocatalysis mark. Positions 635 to 896 constitute a Protein kinase domain; it reads IHIEKIIGSG…QIVSVLDALI (262 aa). Residues 641–649 and Lys-667 each bind ATP; that span reads IGSGDSGEV. The active-site Proton acceptor is Asp-760. Residue Tyr-839 is modified to Phosphotyrosine; by autocatalysis. Residues 930-994 form the SAM domain; sequence GGGLTVGDWL…LGSIQTMRAQ (65 aa). Residues 1003–1005 carry the PDZ-binding motif; the sequence is RHL.

It belongs to the protein kinase superfamily. Tyr protein kinase family. Ephrin receptor subfamily. As to quaternary structure, heterotetramer upon binding of the ligand. The heterotetramer is composed of an ephrin dimer and a receptor dimer. Oligomerization is probably required to induce biological responses. May also form heterodimers with other ephrin receptors. Interacts with FYN; possible downstream effector of EPHA8 in regulation of cell adhesion. Interacts with PIK3CG; regulates integrin-mediated cell adhesion to substrate. Interacts with TIAM1; regulates clathrin-mediated endocytosis of EPHA8. Interacts with ANKS1A and ANKS1B; EPHA8 kinase activity-independent but stimulated by EPHA8 ubiquitination. In terms of processing, phosphorylated. Phosphorylation is stimulated upon binding of its ligands including EFNA2, EFNA3 and EFNA5. Autophosphorylation on Tyr-616 is critical for association with FYN. Autophosphorylation on Tyr-839 modulates tyrosine kinase activity. Ubiquitinated. Ubiquitination by CBL regulates the receptor stability and activity through proteasomal degradation. ANKS1A prevents ubiquitination and degradation.

Its subcellular location is the cell membrane. The protein resides in the cell projection. The protein localises to the early endosome membrane. The catalysed reaction is L-tyrosyl-[protein] + ATP = O-phospho-L-tyrosyl-[protein] + ADP + H(+). Functionally, receptor tyrosine kinase which binds promiscuously GPI-anchored ephrin-A family ligands residing on adjacent cells, leading to contact-dependent bidirectional signaling into neighboring cells. The signaling pathway downstream of the receptor is referred to as forward signaling while the signaling pathway downstream of the ephrin ligand is referred to as reverse signaling. The GPI-anchored ephrin-A EFNA2, EFNA3, and EFNA5 are able to activate EPHA8 through phosphorylation. With EFNA5 may regulate integrin-mediated cell adhesion and migration on fibronectin substrate but also neurite outgrowth. During development of the nervous system also plays a role in axon guidance. Downstream effectors of the EPHA8 signaling pathway include FYN which promotes cell adhesion upon activation by EPHA8 and the MAP kinases in the stimulation of neurite outgrowth. This is Ephrin type-A receptor 8 (EPHA8) from Homo sapiens (Human).